Consider the following 221-residue polypeptide: MEAGGVADSFLSSACVLFTLGMFSTGLSDLRHMQRTRSVDNIQFLPFLTTDVNNLSWLSYGVLKGDGTLIIVNSVGAVLQTLYILAYLHYSPQKHGVLLQTATLLAVLLLGYGYFWLLVPDLEARLQQLGLFCSVFTISMYLSPLADLAKIVQTKSTQRLSFSLTIATLFCSASWSIYGFRLRDPYITVPNLPGILTSLIRLGLFCKYPPEQDRKYRLLQT.

Helical transmembrane passes span 3 to 23 (AGGV…LGMF), 43 to 63 (QFLP…YGVL), 68 to 88 (TLII…LAYL), 102 to 122 (ATLL…VPDL), 129 to 149 (LGLF…ADLA), 160 to 180 (LSFS…IYGF), and 186 to 206 (YITV…GLFC). The MtN3/slv 1 domain occupies 10-94 (FLSSACVLFT…LAYLHYSPQK (85 aa)). Residues 127–212 (QQLGLFCSVF…GLFCKYPPEQ (86 aa)) enclose the MtN3/slv 2 domain. Positions 149 to 221 (AKIVQTKSTQ…QDRKYRLLQT (73 aa)) are mediates interaction with TRPV2.

This sequence belongs to the SWEET sugar transporter family. As to quaternary structure, interacts with TRPV2; the interaction probably occurs intracellularly and depends on TRPV2 N-glycosylation. Expressed at high levels in lung, placenta, spleen and thymus, at intermediate levels in brain, heart, kidney and testis, and at low levels in bone marrow, liver and lymph node. Within the thymus expression is highest in non-lymphoid cells.

The protein resides in the golgi apparatus membrane. Its subcellular location is the cell membrane. Mediates sugar transport across membranes. May regulate the expression of RAG1 a gene involved in V(D)J recombination. The chain is Sugar transporter SWEET1 (Slc50a1) from Mus musculus (Mouse).